Here is a 345-residue protein sequence, read N- to C-terminus: Biotin synthase (345 aa).

One can recognise a Radical SAM core domain in the interval 67–295 (YKVQLASLLS…KSRIRLSAGR (229 aa)). Residues C82, C86, and C89 each contribute to the [4Fe-4S] cluster site. Positions 126, 158, 218, and 290 each coordinate [2Fe-2S] cluster.

Belongs to the radical SAM superfamily. Biotin synthase family. Homodimer. The cofactor is [4Fe-4S] cluster. [2Fe-2S] cluster is required as a cofactor.

It carries out the reaction (4R,5S)-dethiobiotin + (sulfur carrier)-SH + 2 reduced [2Fe-2S]-[ferredoxin] + 2 S-adenosyl-L-methionine = (sulfur carrier)-H + biotin + 2 5'-deoxyadenosine + 2 L-methionine + 2 oxidized [2Fe-2S]-[ferredoxin]. It participates in cofactor biosynthesis; biotin biosynthesis; biotin from 7,8-diaminononanoate: step 2/2. In terms of biological role, catalyzes the conversion of dethiobiotin (DTB) to biotin by the insertion of a sulfur atom into dethiobiotin via a radical-based mechanism. The protein is Biotin synthase of Prochlorococcus marinus (strain NATL1A).